A 523-amino-acid chain; its full sequence is Bifunctional purine biosynthesis protein PurH (523 aa).

An MGS-like domain is found at 1-150; the sequence is MSDVVPVRNA…KNHGDVAIAT (150 aa).

It belongs to the PurH family.

The enzyme catalyses (6R)-10-formyltetrahydrofolate + 5-amino-1-(5-phospho-beta-D-ribosyl)imidazole-4-carboxamide = 5-formamido-1-(5-phospho-D-ribosyl)imidazole-4-carboxamide + (6S)-5,6,7,8-tetrahydrofolate. It catalyses the reaction IMP + H2O = 5-formamido-1-(5-phospho-D-ribosyl)imidazole-4-carboxamide. It functions in the pathway purine metabolism; IMP biosynthesis via de novo pathway; 5-formamido-1-(5-phospho-D-ribosyl)imidazole-4-carboxamide from 5-amino-1-(5-phospho-D-ribosyl)imidazole-4-carboxamide (10-formyl THF route): step 1/1. Its pathway is purine metabolism; IMP biosynthesis via de novo pathway; IMP from 5-formamido-1-(5-phospho-D-ribosyl)imidazole-4-carboxamide: step 1/1. The sequence is that of Bifunctional purine biosynthesis protein PurH from Rhodopirellula baltica (strain DSM 10527 / NCIMB 13988 / SH1).